We begin with the raw amino-acid sequence, 391 residues long: MTRGICILGATGSIGKSTLDVVSRHPDQFRIVALTGNHRVAEMQLLCQQHHPELVVMAAPEAAQQLRVGLGDAGLKKIQVESGPEALAEAARMSGVDEVMAAIVGAAGLLPTLAAVEAGKKVYLANKECLVMAGNLFMERVRQHQVTLLPIDSEHNAVFQCFADGKGVRRILLTASGGPFRTWPAEHLAVVTPDQACAHPNWVMGRKISVDSATMMNKGLEVIEAHWLFDLPASRIDVMIHPQSIIHSMVEYVDGSVLAQLGNPDMRTPIAHALAFPERMESGVSSLDLAHGPDLQFEAPDLQRFPCLALAFDALQAGGAAATVLNAANEIAVQAFLEGHLPFLRIAAVVEDTLGELQPAAPDHLDDVLAIDQLAREVALRHLARHGSGMQ.

NADPH contacts are provided by Thr11, Gly12, Ser13, Ile14, and Asn126. Lys127 provides a ligand contact to 1-deoxy-D-xylulose 5-phosphate. Position 128 (Glu128) interacts with NADPH. Asp152 lines the Mn(2+) pocket. 1-deoxy-D-xylulose 5-phosphate is bound by residues Ser153, Glu154, Ser176, and His199. Glu154 is a binding site for Mn(2+). Residue Gly205 participates in NADPH binding. 1-deoxy-D-xylulose 5-phosphate-binding residues include Ser212, Asn217, Lys218, and Glu221. Glu221 serves as a coordination point for Mn(2+).

Belongs to the DXR family. Requires Mg(2+) as cofactor. The cofactor is Mn(2+).

The enzyme catalyses 2-C-methyl-D-erythritol 4-phosphate + NADP(+) = 1-deoxy-D-xylulose 5-phosphate + NADPH + H(+). It participates in isoprenoid biosynthesis; isopentenyl diphosphate biosynthesis via DXP pathway; isopentenyl diphosphate from 1-deoxy-D-xylulose 5-phosphate: step 1/6. Functionally, catalyzes the NADPH-dependent rearrangement and reduction of 1-deoxy-D-xylulose-5-phosphate (DXP) to 2-C-methyl-D-erythritol 4-phosphate (MEP). In Acidithiobacillus ferrooxidans (strain ATCC 53993 / BNL-5-31) (Leptospirillum ferrooxidans (ATCC 53993)), this protein is 1-deoxy-D-xylulose 5-phosphate reductoisomerase.